The following is a 20-amino-acid chain: Disintegrin (20 aa).

Residues 1-20 (EAGEECDCGTPENPCCDAAT) enclose the Disintegrin domain. 2 cysteine pairs are disulfide-bonded: cysteine 6–cysteine 15 and cysteine 8–cysteine 16.

The protein belongs to the venom metalloproteinase (M12B) family. P-II subfamily. P-IIa sub-subfamily. As to quaternary structure, monomer. Expressed by the venom gland.

It localises to the secreted. In terms of biological role, inhibits fibrinogen interaction with platelets. Acts by binding to alpha-IIb/beta-3 (ITGA2B/ITGB3) on the platelet surface and inhibits aggregation induced by ADP, thrombin, platelet-activating factor and collagen. This Bothrops fonsecai (Fonseca's lancehead) protein is Disintegrin.